A 286-amino-acid chain; its full sequence is Puff II/9-1 protein (286 aa).

Residues 1–19 (MKQFIVLTVVLLAIQELQG) form the signal peptide. The interval 61-235 (ITAIKKDNDF…ENALNTLRCE (175 aa)) is helical. Asn156 carries N-linked (GlcNAc...) asparagine glycosylation.

This Bradysia coprophila (Dark-winged fungus gnat) protein is Puff II/9-1 protein (II/9-1).